Consider the following 336-residue polypeptide: tRNA N6-adenosine threonylcarbamoyltransferase (336 aa).

2 residues coordinate Fe cation: histidine 114 and histidine 118. Substrate is bound by residues 136 to 140 (LVSGG), aspartate 169, glycine 182, aspartate 186, and asparagine 275. Aspartate 302 is a Fe cation binding site.

The protein belongs to the KAE1 / TsaD family. The cofactor is Fe(2+).

The protein resides in the cytoplasm. The catalysed reaction is L-threonylcarbamoyladenylate + adenosine(37) in tRNA = N(6)-L-threonylcarbamoyladenosine(37) in tRNA + AMP + H(+). Its function is as follows. Required for the formation of a threonylcarbamoyl group on adenosine at position 37 (t(6)A37) in tRNAs that read codons beginning with adenine. Is involved in the transfer of the threonylcarbamoyl moiety of threonylcarbamoyl-AMP (TC-AMP) to the N6 group of A37, together with TsaE and TsaB. TsaD likely plays a direct catalytic role in this reaction. The polypeptide is tRNA N6-adenosine threonylcarbamoyltransferase (Streptococcus agalactiae serotype III (strain NEM316)).